We begin with the raw amino-acid sequence, 109 residues long: Period circadian protein (109 aa).

The disordered stretch occupies residues 59–109 (CFEGSGGSGSSGNFTSGSNLNMRSVTNTSNTGTGTSSESVPLVTLTEALIS). The span at 69 to 98 (SGNFTSGSNLNMRSVTNTSNTGTGTSSESV) shows a compositional bias: low complexity.

Forms a heterodimer with timeless (TIM); the complex then translocates into the nucleus. Phosphorylated with a circadian rhythmicity, probably by the double-time protein (dbt). Phosphorylation could be implicated in the stability of per monomer and in the formation of heterodimer per-tim.

It is found in the nucleus. Its subcellular location is the cytoplasm. It localises to the perinuclear region. Functionally, essential for biological clock functions. Determines the period length of circadian and ultradian rhythms; an increase in PER dosage leads to shortened circadian rhythms and a decrease leads to lengthened circadian rhythms. Essential for the circadian rhythmicity of locomotor activity, eclosion behavior, and for the rhythmic component of the male courtship song that originates in the thoracic nervous system. The biological cycle depends on the rhythmic formation and nuclear localization of the TIM-PER complex. Light induces the degradation of TIM, which promotes elimination of PER. Nuclear activity of the heterodimer coordinatively regulates PER and TIM transcription through a negative feedback loop. Behaves as a negative element in circadian transcriptional loop. Does not appear to bind DNA, suggesting indirect transcriptional inhibition. This is Period circadian protein (per) from Syritta pipiens (Hoverfly).